Reading from the N-terminus, the 51-residue chain is Insulin (51 aa).

Disulfide bonds link C7-C37, C19-C50, and C36-C41.

The protein belongs to the insulin family. In terms of assembly, heterodimer of a B chain and an A chain linked by two disulfide bonds.

The protein resides in the secreted. Functionally, insulin decreases blood glucose concentration. It increases cell permeability to monosaccharides, amino acids and fatty acids. It accelerates glycolysis, the pentose phosphate cycle, and glycogen synthesis in liver. The protein is Insulin (INS) of Balaenoptera physalus (Fin whale).